The primary structure comprises 412 residues: Multifunctional CCA protein (412 aa).

ATP-binding residues include G8 and R11. CTP contacts are provided by G8 and R11. Positions 21 and 23 each coordinate Mg(2+). Residues R91, R137, and R140 each contribute to the ATP site. CTP-binding residues include R91, R137, and R140. An HD domain is found at T228–W329.

Belongs to the tRNA nucleotidyltransferase/poly(A) polymerase family. Bacterial CCA-adding enzyme type 1 subfamily. In terms of assembly, monomer. Can also form homodimers and oligomers. It depends on Mg(2+) as a cofactor. Ni(2+) serves as cofactor.

It carries out the reaction a tRNA precursor + 2 CTP + ATP = a tRNA with a 3' CCA end + 3 diphosphate. The enzyme catalyses a tRNA with a 3' CCA end + 2 CTP + ATP = a tRNA with a 3' CCACCA end + 3 diphosphate. Functionally, catalyzes the addition and repair of the essential 3'-terminal CCA sequence in tRNAs without using a nucleic acid template. Adds these three nucleotides in the order of C, C, and A to the tRNA nucleotide-73, using CTP and ATP as substrates and producing inorganic pyrophosphate. tRNA 3'-terminal CCA addition is required both for tRNA processing and repair. Also involved in tRNA surveillance by mediating tandem CCA addition to generate a CCACCA at the 3' terminus of unstable tRNAs. While stable tRNAs receive only 3'-terminal CCA, unstable tRNAs are marked with CCACCA and rapidly degraded. This chain is Multifunctional CCA protein, found in Escherichia coli O6:H1 (strain CFT073 / ATCC 700928 / UPEC).